We begin with the raw amino-acid sequence, 77 residues long: UPF0291 protein BLi02035/BL02933 (77 aa).

The disordered stretch occupies residues 57–77 (PEGNDVTPEKLKQEKRNRRLH).

It belongs to the UPF0291 family.

The protein resides in the cytoplasm. This chain is UPF0291 protein BLi02035/BL02933, found in Bacillus licheniformis (strain ATCC 14580 / DSM 13 / JCM 2505 / CCUG 7422 / NBRC 12200 / NCIMB 9375 / NCTC 10341 / NRRL NRS-1264 / Gibson 46).